The primary structure comprises 176 residues: NAD(P)H-quinone oxidoreductase subunit 6, chloroplastic (176 aa).

Transmembrane regions (helical) follow at residues 10–30, 32–52, 61–81, 92–112, and 152–172; these read FLLVFLGSGLILGGLGVVLLT, PIYSAFSLGLVLVCISLFYIP, AQLLIYVGAINVLIIFAVMFM, LWTVGDGVTSLLCTSIFVSLI, and FFLPFELISIILLVALIGAIA.

This sequence belongs to the complex I subunit 6 family. In terms of assembly, NDH is composed of at least 16 different subunits, 5 of which are encoded in the nucleus.

The protein resides in the plastid. The protein localises to the chloroplast thylakoid membrane. The enzyme catalyses a plastoquinone + NADH + (n+1) H(+)(in) = a plastoquinol + NAD(+) + n H(+)(out). It carries out the reaction a plastoquinone + NADPH + (n+1) H(+)(in) = a plastoquinol + NADP(+) + n H(+)(out). Functionally, NDH shuttles electrons from NAD(P)H:plastoquinone, via FMN and iron-sulfur (Fe-S) centers, to quinones in the photosynthetic chain and possibly in a chloroplast respiratory chain. The immediate electron acceptor for the enzyme in this species is believed to be plastoquinone. Couples the redox reaction to proton translocation, and thus conserves the redox energy in a proton gradient. This is NAD(P)H-quinone oxidoreductase subunit 6, chloroplastic (ndhG) from Platanus occidentalis (Sycamore).